A 165-amino-acid polypeptide reads, in one-letter code: Small ribosomal subunit protein bS16 (165 aa).

The interval 84–165 is disordered; that stretch reads WTHGNNPEKG…EAPAEEAAEG (82 aa). Basic and acidic residues predominate over residues 89 to 130; that stretch reads NPEKGKPGKKAQERLAERAQREEERKQAEADAKAAAEAEKAA. The segment covering 131–157 has biased composition (low complexity); sequence AAEAAAAAAAAPAVEEAPAEEAPAAEA.

Belongs to the bacterial ribosomal protein bS16 family.

The polypeptide is Small ribosomal subunit protein bS16 (Caulobacter vibrioides (strain ATCC 19089 / CIP 103742 / CB 15) (Caulobacter crescentus)).